The primary structure comprises 831 residues: DNA polymerase I, thermostable (831 aa).

The 85-residue stretch at Arg174–Gly258 folds into the 5'-3' exonuclease domain. The interval Glu409–Glu831 is polymerase.

The protein belongs to the DNA polymerase type-A family.

The catalysed reaction is DNA(n) + a 2'-deoxyribonucleoside 5'-triphosphate = DNA(n+1) + diphosphate. Its function is as follows. In addition to polymerase activity, this DNA polymerase exhibits 5'-3' exonuclease activity. The protein is DNA polymerase I, thermostable (polA) of Thermus thermophilus.